The sequence spans 295 residues: Sulfotransferase 1 family member D1 (295 aa).

48 to 53 is a binding site for 3'-phosphoadenylyl sulfate; the sequence is KSGTTW. Substrate-binding positions include Phe81 and 106–108; that span reads KTH. His108 serves as the catalytic Proton acceptor. Residues Arg130 and Ser138 each contribute to the 3'-phosphoadenylyl sulfate site. Substrate is bound at residue Phe142. Residues Tyr193, 227 to 232, and 257 to 259 contribute to the 3'-phosphoadenylyl sulfate site; these read SSFSVM and RKG.

The protein belongs to the sulfotransferase 1 family. Detected in kidney and liver. Detected in kidney collecting duct cells.

The protein localises to the cytoplasm. Sulfotransferase with broad substrate specificity that utilizes 3'-phospho-5'-adenylyl sulfate (PAPS) as sulfonate donor to catalyze the sulfate conjugation of catecholamines, such as dopamine, prostaglandins, leukotriene E4, drugs and xenobiotic compounds. Has sulfotransferase activity towards p-nitrophenol, 2-naphthylamine and minoxidil (in vitro). Sulfonation increases the water solubility of most compounds, and therefore their renal excretion, but it can also result in bioactivation to form active metabolites. In Mus musculus (Mouse), this protein is Sulfotransferase 1 family member D1 (Sult1d1).